Here is a 360-residue protein sequence, read N- to C-terminus: Peptide chain release factor 1 (360 aa).

Position 235 is an N5-methylglutamine (glutamine 235). Residues 284-293 show a composition bias toward basic and acidic residues; it reads HKRQQEEAST. The interval 284–305 is disordered; that stretch reads HKRQQEEASTRRNLLGSGDRSD.

It belongs to the prokaryotic/mitochondrial release factor family. Methylated by PrmC. Methylation increases the termination efficiency of RF1.

It is found in the cytoplasm. In terms of biological role, peptide chain release factor 1 directs the termination of translation in response to the peptide chain termination codons UAG and UAA. This chain is Peptide chain release factor 1, found in Pectobacterium atrosepticum (strain SCRI 1043 / ATCC BAA-672) (Erwinia carotovora subsp. atroseptica).